Consider the following 171-residue polypeptide: uncharacterized protein (171 aa).

The N-terminal stretch at 1–24 is a signal peptide; sequence MIFDSLTMTQSSLSLLLLTGAIFS. The Extracellular segment spans residues 25–70; sequence ISALYLTLFHRCATFSATSDLFLLVPLKFVSRDINDRLKTHYHHSC. The helical transmembrane segment at 71 to 91 threads the bilayer; the sequence is LGSPFLCIIFLFISPLLNYHF. Residues 92–140 are Cytoplasmic-facing; it reads RSLVRPPKIHQKGSIPTLTKNAETRCSHHLKQAAATGEVCKVVVIIKGH. Residues 141 to 161 form a helical membrane-spanning segment; that stretch reads ILKDCSIFFFIIFPLIYPLFI. The Extracellular portion of the chain corresponds to 162–171; the sequence is NCSSKYNGLQ.

It localises to the membrane. This is an uncharacterized protein from Saccharomyces cerevisiae (strain ATCC 204508 / S288c) (Baker's yeast).